Consider the following 216-residue polypeptide: MGGKWSKHSVPGWSTVRERMRRAEPATDRVRQTEPAAVGVGAVSRDLEKHGAITSSNTAATNADCAWLEAYEDEEVGFPVRPQVPLRPMTYKAAIDLSHFLKEKGGLEGLIYSQKRQDILDLWIYHTQGYFPDWQNYTAGPGVRFPLTFGWCFKLVPVDPEKVEEANEGENNCLLHPMSQHGMDDPEKEVLVWKFDSKLALHHVARELHPEYYKDC.

Positions 1-32 are disordered; that stretch reads MGGKWSKHSVPGWSTVRERMRRAEPATDRVRQ. Gly2 carries the N-myristoyl glycine; by host lipid modification. A Phosphoserine; by host modification is found at Ser6. Residues 16–32 are compositionally biased toward basic and acidic residues; sequence VRERMRRAEPATDRVRQ. Residues 72–75 form an acidic; interacts with host PACS1 and PACS2; stabilizes the interaction of NEF/MHC-I with host AP1M1; necessary for MHC-I internalization region; that stretch reads EDEE. The tract at residues 79–88 is SH3-binding; interaction with Src family tyrosine kinases; sequence PVRPQVPLRP. A PxxP; stabilizes the interaction of NEF/MHC-I with host AP1M1; necessary for MHC-I internalization motif is present at residues 82 to 85; that stretch reads PQVP. Residues 118 to 134 are mediates dimerization, Nef-PTE1 interaction; that stretch reads DILDLWIYHTQGYFPDW. Residues 158 to 190 are binding to ATP6V1H; sequence VDPEKVEEANEGENNCLLHPMSQHGMDDPEKEV. The short motif at 174-175 is the Dileucine internalization motif; necessary for CD4 internalization element; sequence LL. A Diacidic; necessary for CD4 internalization motif is present at residues 184–185; it reads DD.

The protein belongs to the lentivirus primate group Nef protein family. As to quaternary structure, monomer; cytosolic form. Homodimer; membrane bound form. Interacts with Nef associated p21-activated kinase (PAK2); this interaction activates PAK2. Associates with the Nef-MHC-I-AP1 complex; this complex is required for MHC-I internalization. Interacts (via C-terminus) with host PI3-kinase. Interacts with host PACS1; this interaction seems to be weak. Interacts with host PACS2. Interacts with host LCK and MAPK3; these interactions inhibit the kinase activity of the latter. Interacts with host ATP6V1H; this interaction may play a role in CD4 endocytosis. Associates with the CD4-Nef-AP2 complex; this complex is required for CD4 internalization. Interacts with host AP2 subunit alpha and AP2 subunit sigma2. Interacts with TCR-zeta chain; this interaction up-regulates the Fas ligand (FasL) surface expression. Interacts with host HCK, LYN, and SRC; these interactions activate the Src family kinases. Interacts with MAP3K5; this interaction inhibits the Fas and TNFR-mediated death signals. Interacts with beta-COP and PTE1. Interacts with human RACK1; this increases Nef phosphorylation by PKC. Interacts with TP53; this interaction decreases the half-life of TP53, protecting the infected cell against p53-mediated apoptosis. Post-translationally, the virion-associated Nef proteins are cleaved by the viral protease to release the soluble C-terminal core protein. Nef is probably cleaved concomitantly with viral structural proteins on maturation of virus particles. In terms of processing, myristoylated. Phosphorylated on serine residues, probably by host PKCdelta and theta.

The protein localises to the host cell membrane. Its subcellular location is the virion. The protein resides in the secreted. It localises to the host Golgi apparatus membrane. Factor of infectivity and pathogenicity, required for optimal virus replication. Alters numerous pathways of T-lymphocyte function and down-regulates immunity surface molecules in order to evade host defense and increase viral infectivity. Alters the functionality of other immunity cells, like dendritic cells, monocytes/macrophages and NK cells. Its function is as follows. In infected CD4(+) T-lymphocytes, down-regulates the surface MHC-I, mature MHC-II, CD4, CD28, CCR5 and CXCR4 molecules. Mediates internalization and degradation of host CD4 through the interaction of with the cytoplasmic tail of CD4, the recruitment of AP-2 (clathrin adapter protein complex 2), internalization through clathrin coated pits, and subsequent transport to endosomes and lysosomes for degradation. Diverts host MHC-I molecules to the trans-Golgi network-associated endosomal compartments by an endocytic pathway to finally target them for degradation. MHC-I down-regulation may involve AP-1 (clathrin adapter protein complex 1) or possibly Src family kinase-ZAP70/Syk-PI3K cascade recruited by PACS2. In consequence infected cells are masked for immune recognition by cytotoxic T-lymphocytes. Decreasing the number of immune receptors also prevents reinfection by more HIV particles (superinfection). Down-regulates host SERINC3 and SERINC5 thereby excluding these proteins from the viral particles. Virion infectivity is drastically higher when SERINC3 or SERINC5 are excluded from the viral envelope, because these host antiviral proteins impair the membrane fusion event necessary for subsequent virion penetration. Functionally, bypasses host T-cell signaling by inducing a transcriptional program nearly identical to that of anti-CD3 cell activation. Interaction with TCR-zeta chain up-regulates the Fas ligand (FasL). Increasing surface FasL molecules and decreasing surface MHC-I molecules on infected CD4(+) cells send attacking cytotoxic CD8+ T-lymphocytes into apoptosis. In terms of biological role, plays a role in optimizing the host cell environment for viral replication without causing cell death by apoptosis. Protects the infected cells from apoptosis in order to keep them alive until the next virus generation is ready to strike. Inhibits the Fas and TNFR-mediated death signals by blocking MAP3K5/ASK1. Decreases the half-life of TP53, protecting the infected cell against p53-mediated apoptosis. Inhibits the apoptotic signals regulated by the Bcl-2 family proteins through the formation of a Nef/PI3-kinase/PAK2 complex that leads to activation of PAK2 and induces phosphorylation of host BAD. Extracellular Nef protein targets CD4(+) T-lymphocytes for apoptosis by interacting with CXCR4 surface receptors. The protein is Protein Nef of Homo sapiens (Human).